A 396-amino-acid polypeptide reads, in one-letter code: Flavohemoprotein (396 aa).

The region spanning 1–136 (MLDTQTIAIV…LADVFIQRES (136 aa)) is the Globin domain. His85 contacts heme b. Catalysis depends on charge relay system residues Tyr95 and Glu135. The interval 147 to 396 (GGWRTLRRFR…YECFGPHKVI (250 aa)) is reductase. Positions 150–255 (RTLRRFRIIK…APPRGDFFLD (106 aa)) constitute an FAD-binding FR-type domain. Residues Tyr188 and 204 to 207 (RQYS) each bind FAD. Position 268–273 (268–273 (GVGQTP)) interacts with NADP(+). 389–392 (CFGP) lines the FAD pocket.

Belongs to the globin family. Two-domain flavohemoproteins subfamily. This sequence in the C-terminal section; belongs to the flavoprotein pyridine nucleotide cytochrome reductase family. Heme b serves as cofactor. FAD is required as a cofactor.

It catalyses the reaction 2 nitric oxide + NADPH + 2 O2 = 2 nitrate + NADP(+) + H(+). The enzyme catalyses 2 nitric oxide + NADH + 2 O2 = 2 nitrate + NAD(+) + H(+). Is involved in NO detoxification in an aerobic process, termed nitric oxide dioxygenase (NOD) reaction that utilizes O(2) and NAD(P)H to convert NO to nitrate, which protects the bacterium from various noxious nitrogen compounds. Therefore, plays a central role in the inducible response to nitrosative stress. The polypeptide is Flavohemoprotein (Yersinia pestis).